We begin with the raw amino-acid sequence, 307 residues long: Acyl transferase (307 aa).

Residues serine 116, aspartate 213, and histidine 243 each act as charge relay system in the active site.

It belongs to the LuxD family.

It participates in lipid metabolism; fatty acid reduction for biolumincescence. Its function is as follows. Acyl transferase is part of the fatty acid reductase system required for aldehyde biosynthesis; it produces fatty acids for the luminescent reaction. In Aliivibrio fischeri (strain MJ11) (Vibrio fischeri), this protein is Acyl transferase.